We begin with the raw amino-acid sequence, 533 residues long: DELLA protein 2 (533 aa).

The span at 1–12 (MKREHKLEHEDM) shows a compositional bias: basic and acidic residues. A disordered region spans residues 1–24 (MKREHKLEHEDMSSGSGKSGVCWE). The short motif at 31–35 (DELLA) is the DELLA motif element. Residues 157 to 522 (VETQEKGIRL…RPLIATSAWK (366 aa)) form the GRAS domain. The tract at residues 164–218 (IRLVHSLMACAEAVEQNNLKMAEALVKQIGYLAVSQEGAMRKVATYFAEGLARRI) is leucine repeat I (LRI). Residues 166–203 (LVHSLMACAEAVEQNNLKMAEALVKQIGYLAVSQEGAM) form a required for possible homodimerization region. The short motif at 171 to 175 (MACAE) is the LxCxE motif; degenerate element. Positions 232–297 (QIHFYETCPN…GGPPAFRLTG (66 aa)) are VHIID. Positions 263 to 267 (VHVID) match the VHIID motif. Residues 311–343 (QVGWRLAQFAQTIHVQFEYRGFVANSLADLDAS) are leucine repeat II (LRII). Positions 355-443 (VAVNSVFELH…EVYLGKQICN (89 aa)) are PFYRE. The LXXLL motif; degenerate signature appears at 363-367 (LHKLN). Residues 446–522 (ACEGTDRVER…RPLIATSAWK (77 aa)) form an SAW region.

It belongs to the GRAS family. DELLA subfamily. In terms of assembly, may be a homodimer. Post-translationally, ubiquitinated. Upon GA application it is ubiquitinated, leading to its subsequent degradation.

The protein localises to the nucleus. Probable transcriptional regulator that acts as a repressor of the gibberellin (GA) signaling pathway. Probably acts by participating in large multiprotein complexes that repress transcription of GA-inducible genes. Upon GA application, it is degraded by the proteasome, allowing the GA signaling pathway. Together with DELLA1, required to enable arbuscule development during arbuscular mycorrhizal (AM) symbiosis with AM fungi (e.g. Glomus versiforme) via the regulation of RAM1 which, in turn, regulates various AM genes (e.g. NSP1, NSP2, PT4, LEC5, RAM2, EXO70I, STR and RAD1). The polypeptide is DELLA protein 2 (Medicago truncatula (Barrel medic)).